Here is a 316-residue protein sequence, read N- to C-terminus: Ribosomal RNA small subunit methyltransferase H (316 aa).

S-adenosyl-L-methionine is bound by residues 35-37 (GGH), D55, F79, D101, and Q108.

This sequence belongs to the methyltransferase superfamily. RsmH family.

The protein localises to the cytoplasm. The enzyme catalyses cytidine(1402) in 16S rRNA + S-adenosyl-L-methionine = N(4)-methylcytidine(1402) in 16S rRNA + S-adenosyl-L-homocysteine + H(+). Functionally, specifically methylates the N4 position of cytidine in position 1402 (C1402) of 16S rRNA. This Aliivibrio fischeri (strain ATCC 700601 / ES114) (Vibrio fischeri) protein is Ribosomal RNA small subunit methyltransferase H.